We begin with the raw amino-acid sequence, 96 residues long: Muconolactone Delta-isomerase 1 (96 aa).

It belongs to the muconolactone Delta-isomerase family. As to quaternary structure, homodecamer.

It carries out the reaction (S)-muconolactone = (4,5-dihydro-5-oxofuran-2-yl)-acetate. It participates in aromatic compound metabolism; beta-ketoadipate pathway; 5-oxo-4,5-dihydro-2-furylacetate from catechol: step 3/3. The chain is Muconolactone Delta-isomerase 1 (catC1) from Acinetobacter lwoffii.